Reading from the N-terminus, the 281-residue chain is 2,3,4,5-tetrahydropyridine-2,6-dicarboxylate N-succinyltransferase (281 aa).

Substrate contacts are provided by Arg108 and Asp145.

Belongs to the transferase hexapeptide repeat family. Homotrimer.

The protein localises to the cytoplasm. The enzyme catalyses (S)-2,3,4,5-tetrahydrodipicolinate + succinyl-CoA + H2O = (S)-2-succinylamino-6-oxoheptanedioate + CoA. It participates in amino-acid biosynthesis; L-lysine biosynthesis via DAP pathway; LL-2,6-diaminopimelate from (S)-tetrahydrodipicolinate (succinylase route): step 1/3. The chain is 2,3,4,5-tetrahydropyridine-2,6-dicarboxylate N-succinyltransferase from Nitrobacter winogradskyi (strain ATCC 25391 / DSM 10237 / CIP 104748 / NCIMB 11846 / Nb-255).